Consider the following 287-residue polypeptide: Undecaprenyl-diphosphatase (287 aa).

Helical transmembrane passes span 1 to 21, 49 to 69, 101 to 121, 126 to 146, 160 to 180, 203 to 223, 232 to 252, and 267 to 287; these read MALWIAVLLGVVQGIFMFLPV, MILFNLVVHVGTLVSIVVVFA, LFLLGMLSVLFTGVVGLTLKA, VFANPWMIAFTLILTGALLFW, TGVGTATLIGVAQGFALMPGL, YSFFLAIPTICAATLLQAIEV, VSVAALITGFVVAAGVGIVSL, and FSFYVWALAAAILLGWIDLPI.

It belongs to the UppP family.

The protein localises to the cell inner membrane. It carries out the reaction di-trans,octa-cis-undecaprenyl diphosphate + H2O = di-trans,octa-cis-undecaprenyl phosphate + phosphate + H(+). In terms of biological role, catalyzes the dephosphorylation of undecaprenyl diphosphate (UPP). Confers resistance to bacitracin. This chain is Undecaprenyl-diphosphatase, found in Halorhodospira halophila (strain DSM 244 / SL1) (Ectothiorhodospira halophila (strain DSM 244 / SL1)).